Consider the following 244-residue polypeptide: 7-cyano-7-deazaguanine synthase (244 aa).

14 to 24 serves as a coordination point for ATP; sequence FSGGQDSATCV. Cys202, Cys217, Cys220, and Cys223 together coordinate Zn(2+).

The protein belongs to the QueC family. The cofactor is Zn(2+).

The enzyme catalyses 7-carboxy-7-deazaguanine + NH4(+) + ATP = 7-cyano-7-deazaguanine + ADP + phosphate + H2O + H(+). Its pathway is purine metabolism; 7-cyano-7-deazaguanine biosynthesis. Its function is as follows. Catalyzes the ATP-dependent conversion of 7-carboxy-7-deazaguanine (CDG) to 7-cyano-7-deazaguanine (preQ(0)). The protein is 7-cyano-7-deazaguanine synthase of Burkholderia mallei (strain NCTC 10229).